Consider the following 405-residue polypeptide: MTTGEVPDLLAFDDAFAQDRHNRYARMREEPVQRIRTVNGLDAWLITRYEDVKQALLDPRIAKDFGRTQQIIEKRLADAERRPGFSPDLGPHMLNTDPPDHTRLRKLVVKAFTARRVEGLRPRIEQITDDLLDRLAGRSEVDLIDEFAFPLPITVISELMGVEDSRRDDFRSWTNVLVDGSQPEAQAQASVAMVEYLTELIAKKRTEPGDDLLTALLEAVEDGDRLSEGELIAMVFLLLVAGHETTVNLIGNCVLSLLGNPDQLAALRNDPSLLPGAIEETLRYESPVANGTFRHTAEAVRFGDVVIPEGELVWVALGAANRDGERFEDPDRFDITRETTGHVAFGHGIHFCVGAALARLEAQIAVGRLLERFPDLRMAASPDDLRWRFSVLMRGLEKLPVRPGA.

Residue cysteine 352 participates in heme binding.

This sequence belongs to the cytochrome P450 family. The cofactor is heme.

Its subcellular location is the cytoplasm. Functionally, not known, probably involved in the catabolism of octane and guaiacol. It displays a weak activity in the O-dealkylation of 7-ethoxycoumarin. The protein is Cytochrome P450 107B1 (cyp107B1) of Saccharopolyspora erythraea (strain ATCC 11635 / DSM 40517 / JCM 4748 / NBRC 13426 / NCIMB 8594 / NRRL 2338).